Reading from the N-terminus, the 827-residue chain is Lon protease (827 aa).

In terms of domain architecture, Lon N-terminal spans 38–233; it reads LTLLASKYNV…VLLKYLLKDL (196 aa). Position 384 to 391 (384 to 391) interacts with ATP; that stretch reads GPPGVGKT. The Lon proteolytic domain maps to 619 to 800; it reads THLPGVAIGL…EEVIQLALQP (182 aa). Catalysis depends on residues Ser706 and Lys749.

This sequence belongs to the peptidase S16 family. As to quaternary structure, homohexamer. Organized in a ring with a central cavity.

The protein resides in the cytoplasm. The catalysed reaction is Hydrolysis of proteins in presence of ATP.. Its function is as follows. ATP-dependent serine protease that mediates the selective degradation of mutant and abnormal proteins as well as certain short-lived regulatory proteins. Required for cellular homeostasis and for survival from DNA damage and developmental changes induced by stress. Degrades polypeptides processively to yield small peptide fragments that are 5 to 10 amino acids long. Binds to DNA in a double-stranded, site-specific manner. The protein is Lon protease of Amoebophilus asiaticus (strain 5a2).